The following is a 164-amino-acid chain: Phosphopantetheine adenylyltransferase (164 aa).

Ser9 provides a ligand contact to substrate. ATP is bound by residues 9–10 (SF) and His17. Positions 41, 74, and 88 each coordinate substrate. ATP-binding positions include 89-91 (GIR), Glu99, and 124-130 (YAEVSST).

Belongs to the bacterial CoaD family. Homohexamer. The cofactor is Mg(2+).

The protein resides in the cytoplasm. It catalyses the reaction (R)-4'-phosphopantetheine + ATP + H(+) = 3'-dephospho-CoA + diphosphate. It participates in cofactor biosynthesis; coenzyme A biosynthesis; CoA from (R)-pantothenate: step 4/5. In terms of biological role, reversibly transfers an adenylyl group from ATP to 4'-phosphopantetheine, yielding dephospho-CoA (dPCoA) and pyrophosphate. The protein is Phosphopantetheine adenylyltransferase of Chromobacterium violaceum (strain ATCC 12472 / DSM 30191 / JCM 1249 / CCUG 213 / NBRC 12614 / NCIMB 9131 / NCTC 9757 / MK).